The chain runs to 298 residues: Zinc transport system membrane protein TroC (298 aa).

The next 8 membrane-spanning stretches (helical) occupy residues 16-36, 41-61, 68-88, 97-117, 144-164, 187-207, 229-249, and 255-275; these read VVLG…FAVL, LFGD…FLLT, ILLL…LMVM, GAQG…LTHV, VLLI…FWKE, FMLT…VGVI, VLCA…SVVS, and LSTG…SIML.

This sequence belongs to the ABC-3 integral membrane protein family.

The protein localises to the cell membrane. In terms of biological role, part of an ATP-driven transport system TroABCD for zinc. This Treponema pallidum (strain Nichols) protein is Zinc transport system membrane protein TroC (troC).